The primary structure comprises 304 residues: Zinc carboxypeptidase (304 aa).

The Peptidase M14 domain maps to 1-294 (QYHTLPEIYS…DSVVTILKES (294 aa)). Zn(2+)-binding residues include H58 and E61. C125 and C148 are disulfide-bonded. H184 is a binding site for Zn(2+). E259 (proton donor/acceptor) is an active-site residue.

The protein belongs to the peptidase M14 family. Zn(2+) serves as cofactor. In terms of tissue distribution, gut specific.

It localises to the secreted. Its function is as follows. Involved in the digestion of the blood meal. The sequence is that of Zinc carboxypeptidase from Simulium vittatum (Striped black fly).